Consider the following 310-residue polypeptide: MNVTDLPNAIFLMGPTASGKTDLAIALCQTLPCDIISVDSALIYRGMDIGTAKPTAQELALAPHKLIDIIDPALSYSAADFCRDALREMNDIVARGRIPLLVGGTMLYFKALLEGLSPLPSADPAIRAELEEEAARLGWQALHDELVRIDPVAGARIHPNDPQRLSRALEVYRISGKTLTELTQVQGEGLPYRVHQFAIAPSDRALLHKRIEQRFDKMLQSGFEQEVRALYERGDLTPHLPAIRCVGYRQMWDYLAGEVEYDEMRYRGIVATRQLAKRQMTWLRGWPEVTWLESGESGNLARVVARAGVA.

14–21 (GPTASGKT) serves as a coordination point for ATP. Position 16–21 (16–21 (TASGKT)) interacts with substrate. 3 interaction with substrate tRNA regions span residues 39–42 (DSAL), 163–167 (QRLSR), and 244–249 (RCVGYR).

The protein belongs to the IPP transferase family. Monomer. Mg(2+) serves as cofactor.

It carries out the reaction adenosine(37) in tRNA + dimethylallyl diphosphate = N(6)-dimethylallyladenosine(37) in tRNA + diphosphate. Its function is as follows. Catalyzes the transfer of a dimethylallyl group onto the adenine at position 37 in tRNAs that read codons beginning with uridine, leading to the formation of N6-(dimethylallyl)adenosine (i(6)A). The polypeptide is tRNA dimethylallyltransferase (Aeromonas salmonicida (strain A449)).